The primary structure comprises 188 residues: Photosystem I assembly protein Ycf4 (188 aa).

2 consecutive transmembrane segments (helical) span residues 26–48 (FFWA…SSYF) and 63–85 (FIPQ…GYLW).

Belongs to the Ycf4 family.

Its subcellular location is the cellular thylakoid membrane. Functionally, seems to be required for the assembly of the photosystem I complex. In Synechocystis sp. (strain ATCC 27184 / PCC 6803 / Kazusa), this protein is Photosystem I assembly protein Ycf4.